The chain runs to 258 residues: 2S seed storage albumin protein (258 aa).

The signal sequence occupies residues 1-24; it reads MAKLIPTIALVSVLLFIIANASFA. Positions 25-35 are excised as a propeptide; that stretch reads YRTTITTIEID. Intrachain disulfides connect cysteine 49/cysteine 108, cysteine 61/cysteine 97, cysteine 98/cysteine 145, and cysteine 110/cysteine 149. The segment at 64–87 is disordered; sequence YLRQSSSRRSPGEEVLRMPGDENQ. Phosphoserine is present on serine 69. Residues 73 to 83 are compositionally biased toward basic and acidic residues; it reads SPGEEVLRMPG. Residues 77-86 constitute a propeptide that is removed on maturation; it reads EVLRMPGDEN. The residue at position 87 (glutamine 87) is a Pyrrolidone carboxylic acid. 2 propeptides span residues 154–156 and 191–193; these read RTN and SDN. 4 disulfide bridges follow: cysteine 162–cysteine 212, cysteine 175–cysteine 201, cysteine 202–cysteine 249, and cysteine 214–cysteine 256. The residue at position 194 (glutamine 194) is a Pyrrolidone carboxylic acid.

This sequence belongs to the 2S seed storage albumins family. In terms of assembly, the 2 mature proteins consist of heterodimers of a small and a large chain; disulfide-linked. Post-translationally, the N-terminus of both large chains is blocked. In terms of processing, the C-terminus of the allergen Ric c 1 and allergen Ric c 3 small chains are heterogeneous and the length of the chains can vary from 33 to 36 amino acids and from 36 to 40 amino acids respectively.

Functionally, 2S seed storage proteins. The polypeptide is 2S seed storage albumin protein (Ricinus communis (Castor bean)).